Here is a 451-residue protein sequence, read N- to C-terminus: Tubulin gamma-1 chain (451 aa).

Residue S131 is modified to Phosphoserine; by BRSK1. 142-148 (AGGTGSG) provides a ligand contact to GTP.

It belongs to the tubulin family. In terms of assembly, component of the gamma-tubulin ring complex (gTuRC) consisting of TUBGCP2, TUBGCP3, TUBGCP4, TUBGCP5 and TUBGCP6 and gamma-tubulin TUBG1 or TUBG2. TUBGCP2, TUBGCP3, TUBGCP4, TUBGCP5 and TUBGCP6 assemble in a 5:5:2:1:1 stoichiometry; each is associated with a gamma-tubulin, thereby arranging 14 gamma-tubulins in a helical manner. Gamma-tubulin at the first position is blocked by TUBGCP3 at the last position, allowing 13 protafilaments to grow into a microtubule. The gTuRC (via TUBGCP3 and TUBGCP6) interacts with ACTB and MZT1; the interactions form a luminal bridge that stabilizes the initial structure during complex assembly. The gTuRC (via TUBGCP2) interacts with MZT2A/MZT2B and CDK5RAP2 (via CM1 motif); the interactions play a role in gTuRC activation. Interacts with alpha-beta tubulin heterodimers; the interaction allows microtubules to nucleate from the gTuRC. Interacts with B9D2. Interacts with CDK5RAP2; the interaction is leading to centrosomal localization of TUBG1 and CDK5RAP2. Interacts with CIMAP3. Interacts with SAS6 and NUP62 at the centrosome. Interacts with EML3 (phosphorylated at 'Thr-881') and HAUS8. Interacts with DNM2; this interaction may participate in centrosome cohesion. Interacts with CCDC66. Phosphorylation at Ser-131 by BRSK1 regulates centrosome duplication, possibly by mediating relocation of gamma-tubulin and its associated proteins from the cytoplasm to the centrosome.

It localises to the cytoplasm. Its subcellular location is the cytoskeleton. It is found in the microtubule organizing center. The protein resides in the centrosome. The protein localises to the spindle. In terms of biological role, tubulin is the major constituent of microtubules, protein filaments consisting of alpha- and beta-tubulin heterodimers. Gamma-tubulin is a key component of the gamma-tubulin ring complex (gTuRC) which mediates microtubule nucleation. The gTuRC regulates the minus-end nucleation of alpha-beta tubulin heterodimers that grow into microtubule protafilaments, a critical step in centrosome duplication and spindle formation. This chain is Tubulin gamma-1 chain, found in Canis lupus familiaris (Dog).